A 505-amino-acid chain; its full sequence is MPPTASLTRSPPTASQTRTLPRASRTRTPPRASLTRSPPTASLRRTPSRASRTRTPPRASLKRTPSRASLTRTLSRASLTRLKSRASHTRTPSRASLTRTPPTASRTRSLPRASRTRTPPRTSQRRMPPRTSQTRTPPRASLRRTPSRASRTRTPPRASLRRTPSRASLTRTPSRASLTRLKSRASHTRTPSRASLTRTPPTASLTRASRTRTPPRTSQTRTPPRASLRRTPSRASLTRTPSRASLTRTPSRASLTRLKSRASHTRTPSRASLTRTPPTASLTRTPPTASLTRTPPRASLTRSPPRASLTRTPPTASLTRSPPTASLTRTPPRASLTRSPPRASLTRTPSTASLTRTPSRASLTRSKSRASHTRTPSRASLTRTPPRASLTRTPPRASLTRSPPTASLTRMPPTASLTRSPPRASLTRTPPRASLTRSPSTASLTRTPPGTWLRRTPPRTSLTRTPPTASLTRTPYTASLTRTPYTASLMRMPYMTSLMTPYKAR.

Residues 1-16 (MPPTASLTRSPPTASQ) show a composition bias toward polar residues. The interval 1–474 (MPPTASLTRS…TPPTASLTRT (474 aa)) is disordered. Low complexity-rich tracts occupy residues 17–33 (TRTL…PRAS) and 40–59 (TASL…PPRA). Residues 66–78 (SRASLTRTLSRAS) are compositionally biased toward polar residues. Low complexity-rich tracts occupy residues 96–122 (SLTR…PPRT), 129–140 (PRTSQTRTPPRA), and 147–158 (SRASRTRTPPRA). Composition is skewed to polar residues over residues 165–177 (SRAS…SRAS) and 188–200 (TRTP…TRTP). A compositionally biased stretch (low complexity) spans 201–226 (PTASLTRASRTRTPPRTSQTRTPPRA). Composition is skewed to polar residues over residues 233-254 (SRAS…SRAS), 265-293 (TRTP…SLTR), 309-329 (LTRT…SLTR), 345-365 (LTRT…SLTR), 373-383 (TRTPSRASLTR), 399-408 (LTRSPPTASL), and 435-448 (LTRS…TRTP). Low complexity predominate over residues 453-474 (LRRTPPRTSLTRTPPTASLTRT).

This is an uncharacterized protein from Homo sapiens (Human).